The sequence spans 84 residues: Small ribosomal subunit protein bS16 (84 aa).

It belongs to the bacterial ribosomal protein bS16 family.

This is Small ribosomal subunit protein bS16 from Delftia acidovorans (strain DSM 14801 / SPH-1).